A 492-amino-acid polypeptide reads, in one-letter code: MSIYVASRRLSGGTTVTALRYATSLRSYSTSFREERDTFGPIQVPSDKLWGAQTQRSLQNFEIGGERERMPEPIVRAFGVLKKCAAKVNMEYGLDPTIGKAIMQAAQEVAEGKLNDHFPLVVWQTGSGTQSNMNANEVIANRAAEILGRKRGEKCVHPNDHVNRSQSSNDTFPTVMHIAAATEINSRLIPSLKTLHSTLESKSFEFKDIVKIGRTHTQDATPLTLGQEFGGYATQVKYGLNRVTCTLPRLYQLAQGGTAVGTGLNTKKGFDVKIAAAVAEETNLPFVTAENKFEALAAHDACVETSGSLNTIATSLMKIANDIRFLGSGPRCGLGELVLPENEPGSSIMPGKVNPTQCEALTMVCAQVMGNHVAVTVGGSNGHFELNVFKPVIASALLHSVRLIADASASFEKNCVRGIEANRERISKLLHESLMLVTSLNPKIGYDNAAAVAKKAHKEGCTLKEAALNLGVLTAEEFDTLVVPEKMIGPSD.

Residues 1-28 constitute a mitochondrion transit peptide; sequence MSIYVASRRLSGGTTVTALRYATSLRSY. Substrate is bound by residues 127 to 129, 157 to 160, 167 to 169, and Thr215; these read SGT, HPND, and SSN. Catalysis depends on His216, which acts as the Proton donor/acceptor. The active site involves Ser346. Residues Ser347 and 352–354 each bind substrate; that span reads KVN.

It belongs to the class-II fumarase/aspartase family. Fumarase subfamily. In terms of assembly, homotetramer.

Its subcellular location is the mitochondrion. The enzyme catalyses (S)-malate = fumarate + H2O. It participates in carbohydrate metabolism; tricarboxylic acid cycle; (S)-malate from fumarate: step 1/1. Fumarate hydratase activity (fumarate to L-malate) is strongly inhibited by phosphoenolpyruvate, citrate, oxaloacetate, ATP and ADP. Malate dehydratase activity (malate to fumarate) is activated by oxaloacetate, pyruvate, Asn and Gln. Malate dehydratase activity (malate to fumarate) is inhibited by citrate, succinate, ADP, ATP, glucose-6P and phosphoenolpyruvate. In terms of biological role, catalyzes the reversible stereospecific interconversion of fumarate to L-malate. Catalyzes the hydration of fumarate to L-malate in the tricarboxylic acid (TCA) cycle to facilitate a transition step in the production of energy in the form of NADH. This chain is Fumarate hydratase 1, mitochondrial, found in Arabidopsis thaliana (Mouse-ear cress).